Reading from the N-terminus, the 190-residue chain is Putative acetyltransferase DDB_G0275913 (190 aa).

This sequence belongs to the transferase hexapeptide repeat family.

This chain is Putative acetyltransferase DDB_G0275913, found in Dictyostelium discoideum (Social amoeba).